A 274-amino-acid chain; its full sequence is Acetyl-coenzyme A carboxylase carboxyl transferase subunit alpha (274 aa).

Residues 1 to 245 (MENSQELTPW…RENLKKAIEG (245 aa)) enclose the CoA carboxyltransferase C-terminal domain.

Belongs to the AccA family. In terms of assembly, acetyl-CoA carboxylase is a heterohexamer composed of biotin carboxyl carrier protein (AccB), biotin carboxylase (AccC) and two subunits each of ACCase subunit alpha (AccA) and ACCase subunit beta (AccD).

The protein resides in the cytoplasm. The catalysed reaction is N(6)-carboxybiotinyl-L-lysyl-[protein] + acetyl-CoA = N(6)-biotinyl-L-lysyl-[protein] + malonyl-CoA. It participates in lipid metabolism; malonyl-CoA biosynthesis; malonyl-CoA from acetyl-CoA: step 1/1. In terms of biological role, component of the acetyl coenzyme A carboxylase (ACC) complex. First, biotin carboxylase catalyzes the carboxylation of biotin on its carrier protein (BCCP) and then the CO(2) group is transferred by the carboxyltransferase to acetyl-CoA to form malonyl-CoA. This Clostridium acetobutylicum (strain ATCC 824 / DSM 792 / JCM 1419 / IAM 19013 / LMG 5710 / NBRC 13948 / NRRL B-527 / VKM B-1787 / 2291 / W) protein is Acetyl-coenzyme A carboxylase carboxyl transferase subunit alpha.